The sequence spans 525 residues: Probable protein kinase UbiB (525 aa).

In terms of domain architecture, Protein kinase spans 119–501 (RFDHHPVASA…QRRTNRLLSA (383 aa)). Residues 125–133 (VASASIAQV) and K151 contribute to the ATP site. Residue D286 is the Proton acceptor of the active site. The helical transmembrane segment at 502 to 522 (ALLFIGGFAVGIIATHVLAWL) threads the bilayer.

Belongs to the ABC1 family. UbiB subfamily.

It is found in the cell inner membrane. It functions in the pathway cofactor biosynthesis; ubiquinone biosynthesis [regulation]. Is probably a protein kinase regulator of UbiI activity which is involved in aerobic coenzyme Q (ubiquinone) biosynthesis. The chain is Probable protein kinase UbiB from Ralstonia nicotianae (strain ATCC BAA-1114 / GMI1000) (Ralstonia solanacearum).